The sequence spans 448 residues: Na(+)-translocating NADH-quinone reductase subunit A (448 aa).

The protein belongs to the NqrA family. As to quaternary structure, composed of six subunits; NqrA, NqrB, NqrC, NqrD, NqrE and NqrF.

The catalysed reaction is a ubiquinone + n Na(+)(in) + NADH + H(+) = a ubiquinol + n Na(+)(out) + NAD(+). Functionally, NQR complex catalyzes the reduction of ubiquinone-1 to ubiquinol by two successive reactions, coupled with the transport of Na(+) ions from the cytoplasm to the periplasm. NqrA to NqrE are probably involved in the second step, the conversion of ubisemiquinone to ubiquinol. This Alcanivorax borkumensis (strain ATCC 700651 / DSM 11573 / NCIMB 13689 / SK2) protein is Na(+)-translocating NADH-quinone reductase subunit A.